A 379-amino-acid polypeptide reads, in one-letter code: Carbamoyl phosphate synthase small chain (379 aa).

The tract at residues 1 to 183 (MTSQDRSEAV…EAYVVEPDGE (183 aa)) is CPSase. 3 residues coordinate L-glutamine: Ser-51, Gly-235, and Gly-237. Residues 185 to 379 (LYTVVAYDMG…FVELIQANKK (195 aa)) form the Glutamine amidotransferase type-1 domain. Cys-263 functions as the Nucleophile in the catalytic mechanism. 5 residues coordinate L-glutamine: Phe-264, Gln-267, Asn-305, Gly-307, and Phe-308. Residues His-353 and Glu-355 contribute to the active site.

Belongs to the CarA family. In terms of assembly, composed of two chains; the small (or glutamine) chain promotes the hydrolysis of glutamine to ammonia, which is used by the large (or ammonia) chain to synthesize carbamoyl phosphate. Tetramer of heterodimers (alpha,beta)4.

It catalyses the reaction hydrogencarbonate + L-glutamine + 2 ATP + H2O = carbamoyl phosphate + L-glutamate + 2 ADP + phosphate + 2 H(+). The catalysed reaction is L-glutamine + H2O = L-glutamate + NH4(+). Its pathway is amino-acid biosynthesis; L-arginine biosynthesis; carbamoyl phosphate from bicarbonate: step 1/1. The protein operates within pyrimidine metabolism; UMP biosynthesis via de novo pathway; (S)-dihydroorotate from bicarbonate: step 1/3. Small subunit of the glutamine-dependent carbamoyl phosphate synthetase (CPSase). CPSase catalyzes the formation of carbamoyl phosphate from the ammonia moiety of glutamine, carbonate, and phosphate donated by ATP, constituting the first step of 2 biosynthetic pathways, one leading to arginine and/or urea and the other to pyrimidine nucleotides. The small subunit (glutamine amidotransferase) binds and cleaves glutamine to supply the large subunit with the substrate ammonia. The protein is Carbamoyl phosphate synthase small chain of Corynebacterium diphtheriae (strain ATCC 700971 / NCTC 13129 / Biotype gravis).